We begin with the raw amino-acid sequence, 502 residues long: Cyanidin 3-O-glucoside 5-O-glucosyltransferase (acyl-glucose) (502 aa).

The N-terminal stretch at 1 to 30 (MNMSCKFEIVLLVSWWLLLVLVFGVESSMF) is a signal peptide. Asn2 carries N-linked (GlcNAc...) asparagine glycosylation. A beta-D-glucoside contacts are provided by residues Gln52, His150, and 196–197 (NE). Glu197 functions as the Proton donor in the catalytic mechanism. The N-linked (GlcNAc...) asparagine glycan is linked to Asn303. Residues Tyr320 and Glu388 each contribute to the a beta-D-glucoside site. Glu388 functions as the Nucleophile in the catalytic mechanism. A glycan (N-linked (GlcNAc...) asparagine) is linked at Asn425. A beta-D-glucoside contacts are provided by Trp435 and Phe451.

This sequence belongs to the glycosyl hydrolase 1 family. Expressed in petals.

Its subcellular location is the vacuole. The catalysed reaction is cyanidin 3-O-beta-D-glucoside + 1-O-(trans-sinapoyl)-beta-D-glucose = cyanidin 3,5-di-O-beta-D-glucoside + (E)-sinapate. It functions in the pathway pigment biosynthesis; anthocyanin biosynthesis. Its function is as follows. Beta-glycosidase that catalyzes the transfer of glucose moiety to anthocyanidin 3-glucoside at the 5 position. Anthocyanins are ubiquitous colored pigments that are responsible for variations in petal color. Uses acyl-glucoses, but not UDP-glucose, as the glucose donor. The chain is Cyanidin 3-O-glucoside 5-O-glucosyltransferase (acyl-glucose) (AA5GT) from Dianthus caryophyllus (Carnation).